A 446-amino-acid chain; its full sequence is MAAPTLARLVLTHLLVALFGMGSWAAINGIWVELPVVVKDLPEGWSLPSYLSVLVALGNLGLLVVTLWRRLAPGKGERAPIQVVQALSVVGTALLAPLWQHLTVMAGQVHSVAFLALTFVLALACCASNVTYLPFLSRLPPPFLRSFFLGQGLSALLPCVLALGQGVGRLECPPAPANGTPGPPLDFPERFSASAFFGALTALLVISAAAFQGLLLLLPSLVSIPTEGSGTGLRGGAPGVEEEEEEEASPLQEPPSQAAGNTPSPDPAAHRLLSARGACLLGLLATTSALTNGVLPAVQSYSSLPYGRLAYHLAVVLGSASNPLACFLAMGILCRSLAGLGGLSLLGTLFGAYLMALAILSPCPPLVGTSAGMVLVVVLWALCLGVFSYVKVATSSLLHGGGPPALLAAGVAIQVGSLLGAVTMFPPTSIYRVFQSRKDCVDPCEP.

4 consecutive transmembrane segments (helical) span residues 14–34 (LLVA…WVEL), 47–67 (LPSY…VVTL), 79–99 (APIQ…APLW), and 104–124 (VMAG…LALA). N129 is a glycosylation site (N-linked (GlcNAc...) asparagine). 2 helical membrane-spanning segments follow: residues 147 to 167 (FFLG…GQGV) and 196 to 216 (FFGA…GLLL). Residues 228-267 (GSGTGLRGGAPGVEEEEEEEASPLQEPPSQAAGNTPSPDP) are disordered. Over residues 229–238 (SGTGLRGGAP) the composition is skewed to gly residues. Over residues 254–263 (PPSQAAGNTP) the composition is skewed to polar residues. A run of 5 helical transmembrane segments spans residues 278–298 (ACLL…LPAV), 313–333 (LAVV…MGIL), 340–360 (LGGL…LAIL), 367–387 (VGTS…LGVF), and 405–425 (ALLA…VTMF).

Belongs to the riboflavin transporter family.

It is found in the cell membrane. The enzyme catalyses riboflavin(in) = riboflavin(out). Its activity is regulated as follows. Riboflavin transport is Na(+)-independent but moderately pH-sensitive. Activity is strongly inhibited by riboflavin analogs, such as lumiflavin. Weakly inhibited by flavin adenine dinucleotide (FAD) and flavin mononucleotide (FMN). Plasma membrane transporter mediating the uptake by cells of the water soluble vitamin B2/riboflavin that plays a key role in biochemical oxidation-reduction reactions of the carbohydrate, lipid, and amino acid metabolism. May also act as a receptor for 4-hydroxybutyrate. In terms of biological role, (Microbial infection) In case of infection by porcine endogenous retrovirus (PERV-A), acts as a cell receptor to retroviral envelopes. This chain is Solute carrier family 52, riboflavin transporter, member 2 (SLC52A2), found in Sus scrofa (Pig).